We begin with the raw amino-acid sequence, 343 residues long: 4-hydroxy-2-oxovalerate aldolase 1 (343 aa).

A Pyruvate carboxyltransferase domain is found at 8 to 260; sequence ITVHDMSLRD…ETGVDVFAIS (253 aa). Residue 16-17 coordinates substrate; the sequence is RD. Residue D17 coordinates Mn(2+). H20 acts as the Proton acceptor in catalysis. Residues S170 and H199 each coordinate substrate. 2 residues coordinate Mn(2+): H199 and H201. Substrate is bound at residue Y290.

This sequence belongs to the 4-hydroxy-2-oxovalerate aldolase family.

The enzyme catalyses (S)-4-hydroxy-2-oxopentanoate = acetaldehyde + pyruvate. The chain is 4-hydroxy-2-oxovalerate aldolase 1 (bphI) from Burkholderia cenocepacia (strain ATCC BAA-245 / DSM 16553 / LMG 16656 / NCTC 13227 / J2315 / CF5610) (Burkholderia cepacia (strain J2315)).